Here is a 566-residue protein sequence, read N- to C-terminus: MNELHDGESSEEGRINVEDHLEEAKKDDTGHWKHSGTAKPSKFRAFIRLHFKDSRKFAFSRKKEKELTSEDSDAANQSPSGAPESQTEEESDRKIDGTGSSAEGGDGSGTDSISVIKKSFFKSGRKKKDVPKSRNVSRSNGADTSVQREKLKDIFSPHGKEKELAHIKKTVATRARTYSSNSIKICDVEVGPSSFEKVFLLGKGDVGRVYLVREKKSGKFYAMKVLSKQEMIKRNKSKRAFAEQHILATSNHPFIVTLYHSFQSDEYLYLCMEYCMGGEFFRALQRRPGRCLSENEAKFYIAEVTAALEYLHLMGFIYRDLKPENILLHESGHIMLSDFDLSKQSNSAGAPTVIQARNAPSAQNAYALDTKSCIADFRTNSFVGTEEYIAPEVIKGCGHTSAVDWWTLGILFYEMLYATTPFKGKNRNMTFSNILHKDVIFPEYADAPSISSLCKNLIRKLLVKDENDRLGSQAGAADVKLHPFFKNVQWALLRHTEPPIIPKLAPIDEKGNPNISHLKESKSLDITHSPQNTQTVEVPLSNLSGADHGDDPFESFNSVTVHHEWD.

Residues 1–31 are compositionally biased toward basic and acidic residues; that stretch reads MNELHDGESSEEGRINVEDHLEEAKKDDTGH. Disordered regions lie at residues 1 to 39 and 60 to 152; these read MNEL…GTAK and SRKK…EKLK. A compositionally biased stretch (polar residues) spans 74–85; that stretch reads AANQSPSGAPES. Over residues 119-129 the composition is skewed to basic residues; the sequence is SFFKSGRKKKD. A compositionally biased stretch (polar residues) spans 134-145; that stretch reads RNVSRSNGADTS. The Protein kinase domain occupies 195–485; sequence FEKVFLLGKG…AADVKLHPFF (291 aa). ATP is bound by residues 201–209 and lysine 224; that span reads LGKGDVGRV. The active-site Proton acceptor is aspartate 320. A Phosphothreonine modification is found at threonine 379. Serine 381 carries the post-translational modification Phosphoserine. Phosphothreonine is present on threonine 385.

This sequence belongs to the protein kinase superfamily. Ser/Thr protein kinase family. KIN82 subfamily.

It catalyses the reaction L-seryl-[protein] + ATP = O-phospho-L-seryl-[protein] + ADP + H(+). The enzyme catalyses L-threonyl-[protein] + ATP = O-phospho-L-threonyl-[protein] + ADP + H(+). In Schizosaccharomyces pombe (strain 972 / ATCC 24843) (Fission yeast), this protein is Serine/threonine-protein kinase ppk14 (ppk14).